The sequence spans 60 residues: Large ribosomal subunit protein bL32 (60 aa).

Positions 1–60 (MAVQQNKKSPSKRGMHRSHNALTVPGIAVESTTGETHLRHHISPTGFYRGRKVLKTKSEA) are disordered. 2 stretches are compositionally biased toward basic residues: residues 9–19 (SPSKRGMHRSH) and 49–60 (RGRKVLKTKSEA).

The protein belongs to the bacterial ribosomal protein bL32 family.

This Polaromonas sp. (strain JS666 / ATCC BAA-500) protein is Large ribosomal subunit protein bL32.